The following is a 59-amino-acid chain: Cuticle protein 7 isoform a (59 aa).

Gln-1 carries the pyrrolidone carboxylic acid modification.

The sequence is that of Cuticle protein 7 isoform a from Limulus polyphemus (Atlantic horseshoe crab).